Here is a 155-residue protein sequence, read N- to C-terminus: uncharacterized protein (155 aa).

A signal peptide spans 1-24; the sequence is MQQLSKRRLSALFVTAFLPVTAFA.

This is an uncharacterized protein from Chromohalobacter salexigens (strain ATCC BAA-138 / DSM 3043 / CIP 106854 / NCIMB 13768 / 1H11).